The sequence spans 493 residues: Ribose import ATP-binding protein RbsA (493 aa).

ABC transporter domains are found at residues 5-241 (LKIS…VGRR) and 252-491 (EKGE…AAAI). 37–44 (GENGAGKS) contributes to the ATP binding site.

Belongs to the ABC transporter superfamily. Ribose importer (TC 3.A.1.2.1) family. In terms of assembly, the complex is composed of an ATP-binding protein (RbsA), two transmembrane proteins (RbsC) and a solute-binding protein (RbsB).

The protein resides in the cell inner membrane. It catalyses the reaction D-ribose(out) + ATP + H2O = D-ribose(in) + ADP + phosphate + H(+). Part of the ABC transporter complex RbsABC involved in ribose import. Responsible for energy coupling to the transport system. The chain is Ribose import ATP-binding protein RbsA from Haemophilus influenzae (strain 86-028NP).